A 301-amino-acid polypeptide reads, in one-letter code: Homoserine O-acetyltransferase (301 aa).

Catalysis depends on cysteine 142, which acts as the Acyl-thioester intermediate. 2 residues coordinate substrate: lysine 163 and serine 192. The active-site Proton acceptor is the histidine 235. Glutamate 237 is a catalytic residue. Arginine 249 serves as a coordination point for substrate.

Belongs to the MetA family.

It localises to the cytoplasm. It catalyses the reaction L-homoserine + acetyl-CoA = O-acetyl-L-homoserine + CoA. Its pathway is amino-acid biosynthesis; L-methionine biosynthesis via de novo pathway; O-acetyl-L-homoserine from L-homoserine: step 1/1. In terms of biological role, transfers an acetyl group from acetyl-CoA to L-homoserine, forming acetyl-L-homoserine. The polypeptide is Homoserine O-acetyltransferase (Succinatimonas hippei (strain DSM 22608 / JCM 16073 / KCTC 15190 / YIT 12066)).